Reading from the N-terminus, the 205-residue chain is Ypt/Rab-type GTPase ypt7 (205 aa).

GTP is bound by residues 17-23, 33-40, glycine 66, 125-128, and 157-159; these read SGVGKTS, FSASYKAT, NKID, and SAK. The Effector region motif lies at 37-45; the sequence is YKATIGADF. Residues cysteine 203 and cysteine 205 are each lipidated (S-geranylgeranyl cysteine). The residue at position 205 (cysteine 205) is a Cysteine methyl ester.

The protein belongs to the small GTPase superfamily. Rab family. In terms of assembly, interacts with the Rab GDP dissociation inhibitor GDI1.

The protein localises to the vacuole. Rab activation is generally mediated by a guanine exchange factor (GEF), while inactivation through hydrolysis of bound GTP is catalyzed by a GTPase activating protein (GAP). In terms of biological role, ypt/Rab-type GTPases are key regulators of membrane trafficking and intracellular vesicular transport. They act as molecular switches that convert between GTP-bound and GDP-bound states, and regulate virtually all steps of membrane traffic from the formation of the transport vesicle at the donor membrane to its fusion at the target membrane. In the GDP-bound state, Ypt proteins are predominantly cytosolic, solubilized through the interaction with a GDP dissociation inhibitor (GDI). In the GTP-bound state, the proteins are membrane bound and interact with specific effector proteins that select cargo, promote vesicle movement, or verify the correct site of fusion. Required for fungal morphogenesis, vacuole fusion, autophagy, stress resistance and pathogenicity. This Pyricularia oryzae (strain 70-15 / ATCC MYA-4617 / FGSC 8958) (Rice blast fungus) protein is Ypt/Rab-type GTPase ypt7.